The chain runs to 509 residues: Aspartyl/glutamyl-tRNA(Asn/Gln) amidotransferase subunit B (509 aa).

Belongs to the GatB/GatE family. GatB subfamily. In terms of assembly, heterotrimer of A, B and C subunits.

The catalysed reaction is L-glutamyl-tRNA(Gln) + L-glutamine + ATP + H2O = L-glutaminyl-tRNA(Gln) + L-glutamate + ADP + phosphate + H(+). The enzyme catalyses L-aspartyl-tRNA(Asn) + L-glutamine + ATP + H2O = L-asparaginyl-tRNA(Asn) + L-glutamate + ADP + phosphate + 2 H(+). Its function is as follows. Allows the formation of correctly charged Asn-tRNA(Asn) or Gln-tRNA(Gln) through the transamidation of misacylated Asp-tRNA(Asn) or Glu-tRNA(Gln) in organisms which lack either or both of asparaginyl-tRNA or glutaminyl-tRNA synthetases. The reaction takes place in the presence of glutamine and ATP through an activated phospho-Asp-tRNA(Asn) or phospho-Glu-tRNA(Gln). This chain is Aspartyl/glutamyl-tRNA(Asn/Gln) amidotransferase subunit B, found in Psychrobacter arcticus (strain DSM 17307 / VKM B-2377 / 273-4).